Consider the following 390-residue polypeptide: Guanine nucleotide exchange factor for Rab-3A (390 aa).

The segment at 1 to 60 (MWSGQPHPDEGHPPPLEAVPVPWKSVGPCKSHRESLGGLPETPAGEEAQGEEGPAATQLD) is disordered. Residues 40 to 58 (PETPAGEEAQGEEGPAATQ) show a composition bias toward low complexity. Residues 73–161 (EKGSEFLKEE…AEVTALKTLV (89 aa)) adopt a coiled-coil conformation. The disordered stretch occupies residues 166–194 (PASPNRELHPQLLSPTKAGPRKGHLRHKS). Serine 168 and serine 179 each carry phosphoserine. The span at 184-194 (GPRKGHLRHKS) shows a compositional bias: basic residues.

It belongs to the SEC2 family. Interacts with RAB3A and IHPK1 through the coiled-coil domain. This interaction is competitive. IHPK1 kinase activity is not required for this interaction.

Guanine nucleotide exchange factor (GEF) which may activate RAB3A, a GTPase that regulates synaptic vesicle exocytosis. Promotes the exchange of GDP to GTP, converting inactive GDP-bound Rab proteins into their active GTP-bound form. May also activate RAB8A and RAB8B. This Bos taurus (Bovine) protein is Guanine nucleotide exchange factor for Rab-3A (RAB3IL1).